A 426-amino-acid chain; its full sequence is Serine--tRNA ligase (426 aa).

230–232 (TAE) contributes to the L-serine binding site. 261–263 (RSE) is an ATP binding site. An L-serine-binding site is contributed by Glu-284. 348–351 (EISS) is a binding site for ATP. Residue Ser-384 participates in L-serine binding.

Belongs to the class-II aminoacyl-tRNA synthetase family. Type-1 seryl-tRNA synthetase subfamily. In terms of assembly, homodimer. The tRNA molecule binds across the dimer.

It is found in the cytoplasm. The enzyme catalyses tRNA(Ser) + L-serine + ATP = L-seryl-tRNA(Ser) + AMP + diphosphate + H(+). The catalysed reaction is tRNA(Sec) + L-serine + ATP = L-seryl-tRNA(Sec) + AMP + diphosphate + H(+). It functions in the pathway aminoacyl-tRNA biosynthesis; selenocysteinyl-tRNA(Sec) biosynthesis; L-seryl-tRNA(Sec) from L-serine and tRNA(Sec): step 1/1. Catalyzes the attachment of serine to tRNA(Ser). Is also able to aminoacylate tRNA(Sec) with serine, to form the misacylated tRNA L-seryl-tRNA(Sec), which will be further converted into selenocysteinyl-tRNA(Sec). The polypeptide is Serine--tRNA ligase (Streptococcus mutans serotype c (strain ATCC 700610 / UA159)).